We begin with the raw amino-acid sequence, 787 residues long: Signal transducer and activator of transcription 5B (787 aa).

Tyr90 carries the post-translational modification Phosphotyrosine. Phosphoserine is present on residues Ser128 and Ser193. Residues 232 to 321 (KHQKTLQLLR…MLAEVNATIT (90 aa)) form a required for interaction with NMI region. The region spanning 589-686 (WNDGAILGFV…EVYSKYYTPV (98 aa)) is the SH2 domain. Tyr682 carries the phosphotyrosine modification. Phosphotyrosine; by HCK, JAK and PTK6 is present on Tyr699.

It belongs to the transcription factor STAT family. Upon activation, forms homodimers. Forms also heterodimers with related family members. Binds NR3C1. Interacts with NCOA1. Interacts with NMI. Interacts with SOCS7. Interacts (via SH2 domain) with INSR. Interacts with CPEB3; this inhibits STAT5B-mediated transcriptional activation. Tyrosine phosphorylated in response to signaling via activated KIT, resulting in translocation to the nucleus. Tyrosine phosphorylated in response to signaling via activated FLT3; wild-type FLT3 results in much weaker phosphorylation than constitutively activated mutant FLT3. Alternatively, can be phosphorylated by JAK2. Phosphorylation at Tyr-699 by PTK6 or HCK leads to an increase of its transcriptional activity.

Its subcellular location is the cytoplasm. The protein resides in the nucleus. Carries out a dual function: signal transduction and activation of transcription. Mediates cellular responses to the cytokine KITLG/SCF and other growth factors. Binds to the GAS element and activates PRL-induced transcription. Positively regulates hematopoietic/erythroid differentiation. The polypeptide is Signal transducer and activator of transcription 5B (STAT5B) (Homo sapiens (Human)).